Here is a 570-residue protein sequence, read N- to C-terminus: Mitogen-activated protein kinase 11 (570 aa).

Residues 26 to 317 enclose the Protein kinase domain; the sequence is YEVLEVIGKG…AQEALADPYF (292 aa). ATP is bound by residues 32–40 and Lys-55; that span reads IGKGSYGLV. Asp-152 functions as the Proton acceptor in the catalytic mechanism. Phosphothreonine is present on Thr-188. Residues 188 to 190 carry the TXY motif; it reads TDY. Tyr-190 carries the post-translational modification Phosphotyrosine.

This sequence belongs to the protein kinase superfamily. CMGC Ser/Thr protein kinase family. MAP kinase subfamily. Dually phosphorylated on Thr-188 and Tyr-190, which activates the enzyme.

The catalysed reaction is L-seryl-[protein] + ATP = O-phospho-L-seryl-[protein] + ADP + H(+). It carries out the reaction L-threonyl-[protein] + ATP = O-phospho-L-threonyl-[protein] + ADP + H(+). Its activity is regulated as follows. Activated by threonine and tyrosine phosphorylation. This is Mitogen-activated protein kinase 11 (MPK11) from Oryza sativa subsp. japonica (Rice).